The following is a 163-amino-acid chain: Phosphopantetheine adenylyltransferase (163 aa).

Thr-11 contacts substrate. Residues 11–12 and His-19 each bind ATP; that span reads TF. 3 residues coordinate substrate: Lys-43, Leu-75, and Arg-89. Residues 90 to 92, Glu-100, and 125 to 131 contribute to the ATP site; these read GLR and YSFISST.

It belongs to the bacterial CoaD family. Homohexamer. Requires Mg(2+) as cofactor.

It localises to the cytoplasm. The catalysed reaction is (R)-4'-phosphopantetheine + ATP + H(+) = 3'-dephospho-CoA + diphosphate. It participates in cofactor biosynthesis; coenzyme A biosynthesis; CoA from (R)-pantothenate: step 4/5. Its function is as follows. Reversibly transfers an adenylyl group from ATP to 4'-phosphopantetheine, yielding dephospho-CoA (dPCoA) and pyrophosphate. This is Phosphopantetheine adenylyltransferase from Acinetobacter baylyi (strain ATCC 33305 / BD413 / ADP1).